Consider the following 114-residue polypeptide: Cytochrome c oxidase subunit 4B (114 aa).

The next 3 membrane-spanning stretches (helical) occupy residues 29 to 49 (QIVVFALMIFLTLMSFMAVAT), 56 to 76 (FAIPFIFILAVIQFALQLFFF), and 89 to 109 (AFMISGIFITVPTIAALMLLL).

The protein belongs to the cytochrome c oxidase bacterial subunit 4 family.

Its subcellular location is the cell membrane. It catalyses the reaction 4 Fe(II)-[cytochrome c] + O2 + 8 H(+)(in) = 4 Fe(III)-[cytochrome c] + 2 H2O + 4 H(+)(out). This chain is Cytochrome c oxidase subunit 4B (ctaF), found in Alkalihalophilus pseudofirmus (strain ATCC BAA-2126 / JCM 17055 / OF4) (Bacillus pseudofirmus).